The primary structure comprises 998 residues: 2-imino-3-(indol-3-yl)propanoate dimerase (998 aa).

The catalysed reaction is 2 H2O2 = O2 + 2 H2O. It catalyses the reaction 2 2-iminio-3-(indol-3-yl)propanoate + H2O2 = indole-3-pyruvate imine dimer + 2 H2O. It functions in the pathway pigment biosynthesis; violacein biosynthesis. Functionally, catalyzes the hydrogen peroxide-dependent dimerization of two L-tryptophan-derived molecules (imine form of indole 3-pyruvate (IPA)), to form an uncharacterized product suggested to be indole-3-pyruvate imine dimer that can spontaneously convert into dichlorochromopyrrolate (CPA). The uncharacterized product is the substrate of VioE. The protein is 2-imino-3-(indol-3-yl)propanoate dimerase (vioB) of Chromobacterium violaceum (strain ATCC 12472 / DSM 30191 / JCM 1249 / CCUG 213 / NBRC 12614 / NCIMB 9131 / NCTC 9757 / MK).